A 369-amino-acid chain; its full sequence is Protein-glutamate methylesterase/protein-glutamine glutaminase 1 (369 aa).

The region spanning K3–D120 is the Response regulatory domain. Residue D54 is modified to 4-aspartylphosphate. The span at R136–S168 shows a compositional bias: low complexity. The segment at R136–V174 is disordered. The 193-residue stretch at G177–K369 folds into the CheB-type methylesterase domain. Active-site residues include S189, H216, and D312.

This sequence belongs to the CheB family. Phosphorylated by CheA. Phosphorylation of the N-terminal regulatory domain activates the methylesterase activity.

It localises to the cytoplasm. The enzyme catalyses [protein]-L-glutamate 5-O-methyl ester + H2O = L-glutamyl-[protein] + methanol + H(+). It catalyses the reaction L-glutaminyl-[protein] + H2O = L-glutamyl-[protein] + NH4(+). Involved in chemotaxis. Part of a chemotaxis signal transduction system that modulates chemotaxis in response to various stimuli. Catalyzes the demethylation of specific methylglutamate residues introduced into the chemoreceptors (methyl-accepting chemotaxis proteins or MCP) by CheR. Also mediates the irreversible deamidation of specific glutamine residues to glutamic acid. The protein is Protein-glutamate methylesterase/protein-glutamine glutaminase 1 of Oleidesulfovibrio alaskensis (strain ATCC BAA-1058 / DSM 17464 / G20) (Desulfovibrio alaskensis).